Consider the following 431-residue polypeptide: Histidinol dehydrogenase (431 aa).

NAD(+) is bound by residues Tyr-130, Gln-191, and Asn-214. 3 residues coordinate substrate: Ser-237, Gln-261, and His-264. Zn(2+) is bound by residues Gln-261 and His-264. Residues Glu-329 and His-330 each act as proton acceptor in the active site. His-330, Asp-363, Glu-417, and His-422 together coordinate substrate. Asp-363 serves as a coordination point for Zn(2+). Zn(2+) is bound at residue His-422.

Belongs to the histidinol dehydrogenase family. Requires Zn(2+) as cofactor.

The enzyme catalyses L-histidinol + 2 NAD(+) + H2O = L-histidine + 2 NADH + 3 H(+). The protein operates within amino-acid biosynthesis; L-histidine biosynthesis; L-histidine from 5-phospho-alpha-D-ribose 1-diphosphate: step 9/9. Catalyzes the sequential NAD-dependent oxidations of L-histidinol to L-histidinaldehyde and then to L-histidine. The protein is Histidinol dehydrogenase of Psychrobacter arcticus (strain DSM 17307 / VKM B-2377 / 273-4).